The following is a 393-amino-acid chain: 1-deoxy-D-xylulose 5-phosphate reductoisomerase (393 aa).

NADPH contacts are provided by Thr10, Gly11, Ser12, Ile13, Arg37, and Asn124. A 1-deoxy-D-xylulose 5-phosphate-binding site is contributed by Lys125. Glu126 lines the NADPH pocket. Asp150 lines the Mn(2+) pocket. 1-deoxy-D-xylulose 5-phosphate contacts are provided by Ser151, Glu152, Ser182, and His205. Glu152 serves as a coordination point for Mn(2+). Gly211 is an NADPH binding site. 1-deoxy-D-xylulose 5-phosphate contacts are provided by Ser218, Asn223, Lys224, and Glu227. Residue Glu227 coordinates Mn(2+).

This sequence belongs to the DXR family. The cofactor is Mg(2+). Mn(2+) serves as cofactor.

It catalyses the reaction 2-C-methyl-D-erythritol 4-phosphate + NADP(+) = 1-deoxy-D-xylulose 5-phosphate + NADPH + H(+). It participates in isoprenoid biosynthesis; isopentenyl diphosphate biosynthesis via DXP pathway; isopentenyl diphosphate from 1-deoxy-D-xylulose 5-phosphate: step 1/6. Functionally, catalyzes the NADPH-dependent rearrangement and reduction of 1-deoxy-D-xylulose-5-phosphate (DXP) to 2-C-methyl-D-erythritol 4-phosphate (MEP). The sequence is that of 1-deoxy-D-xylulose 5-phosphate reductoisomerase from Nitrosococcus oceani (strain ATCC 19707 / BCRC 17464 / JCM 30415 / NCIMB 11848 / C-107).